We begin with the raw amino-acid sequence, 311 residues long: Mediator of RNA polymerase II transcription subunit 27-A (311 aa).

Belongs to the Mediator complex subunit 27 family. In terms of assembly, component of the Mediator complex.

It localises to the nucleus. Component of the Mediator complex, a coactivator involved in the regulated transcription of nearly all RNA polymerase II-dependent genes. Mediator functions as a bridge to convey information from gene-specific regulatory proteins to the basal RNA polymerase II transcription machinery. Mediator is recruited to promoters by direct interactions with regulatory proteins and serves as a scaffold for the assembly of a functional preinitiation complex with RNA polymerase II and the general transcription factors. The protein is Mediator of RNA polymerase II transcription subunit 27-A (med27-a) of Xenopus laevis (African clawed frog).